The chain runs to 467 residues: MAPRSRRRKHKKPPPVTPMPDIPPTDVSAVRPALPEPGPSIDALGFIALDSDVPGLPQRILQRLNMKSYEEYKLVIDGGTPVPSFGFRCQQEMFQRMEDTFRFCAYCKALPHGLSSCKVLRHCKRCRNVYYCDAECQRSDWPAHRKVCGELRLVAVDRVMEWLLVTGDFVLPSGPWPWLPEEIQNWDTWFSMRGLQLESTLNALLGSHAMTMLWASLGRPRPDPDVLHGSLKRLMTDVLSRPLTLGLGIRTLAIDVGKTGGSTLHVVGASHVETFLIRSGDYDELGYMFPENLGFRVIMVGVDVSADLLQSSSSLPLEPGTVQLSGHRALYHDFWEEQIETGNLAHPDLVAAFHPGFHASPGLMEAWLPTLLLLRDYEIPTLITVYSQQELEASLQVLVNLDTHIIACGANPFASLKPEQVYSKPNKQPVYSSAYYIVFRGCSSCQLDKQQVEEEPDEFSVVESNPN.

Residues 1-13 (MAPRSRRRKHKKP) show a composition bias toward basic residues. The segment at 1–34 (MAPRSRRRKHKKPPPVTPMPDIPPTDVSAVRPAL) is disordered. Positions 14-23 (PPVTPMPDIP) are enriched in pro residues. Residues cysteine 104, cysteine 107, cysteine 123, cysteine 126, cysteine 132, cysteine 136, histidine 144, and cysteine 148 each coordinate Zn(2+). An MYND-type zinc finger spans residues 104-148 (CAYCKALPHGLSSCKVLRHCKRCRNVYYCDAECQRSDWPAHRKVC).

This is Putative protein MSS51 homolog, mitochondrial (Mss51) from Rattus norvegicus (Rat).